The primary structure comprises 1406 residues: DNA-directed RNA polymerase subunit beta' (1406 aa).

Cys-70, Cys-72, Cys-85, and Cys-88 together coordinate Zn(2+). 3 residues coordinate Mg(2+): Asp-460, Asp-462, and Asp-464. 4 residues coordinate Zn(2+): Cys-814, Cys-888, Cys-895, and Cys-898.

Belongs to the RNA polymerase beta' chain family. In terms of assembly, the RNAP catalytic core consists of 2 alpha, 1 beta, 1 beta' and 1 omega subunit. When a sigma factor is associated with the core the holoenzyme is formed, which can initiate transcription. Mg(2+) serves as cofactor. The cofactor is Zn(2+).

The catalysed reaction is RNA(n) + a ribonucleoside 5'-triphosphate = RNA(n+1) + diphosphate. DNA-dependent RNA polymerase catalyzes the transcription of DNA into RNA using the four ribonucleoside triphosphates as substrates. This chain is DNA-directed RNA polymerase subunit beta', found in Sodalis glossinidius (strain morsitans).